The following is a 103-amino-acid chain: uncharacterized protein (103 aa).

The chain crosses the membrane as a helical span at residues 35–57 (PFVSMFQTFLEVLTATVLAFTAY).

Its subcellular location is the host membrane. This is an uncharacterized protein from Acidianus bottle-shaped virus (isolate Italy/Pozzuoli) (ABV).